The chain runs to 268 residues: Tryptophan synthase alpha chain (268 aa).

Residues Glu-49 and Asp-60 each act as proton acceptor in the active site.

Belongs to the TrpA family. Tetramer of two alpha and two beta chains.

It catalyses the reaction (1S,2R)-1-C-(indol-3-yl)glycerol 3-phosphate + L-serine = D-glyceraldehyde 3-phosphate + L-tryptophan + H2O. The protein operates within amino-acid biosynthesis; L-tryptophan biosynthesis; L-tryptophan from chorismate: step 5/5. Its function is as follows. The alpha subunit is responsible for the aldol cleavage of indoleglycerol phosphate to indole and glyceraldehyde 3-phosphate. The polypeptide is Tryptophan synthase alpha chain (Escherichia coli O139:H28 (strain E24377A / ETEC)).